The sequence spans 396 residues: Flavohemoprotein (396 aa).

In terms of domain architecture, Globin spans 1-136 (MLDAQTIATV…LANVFINREA (136 aa)). His-85 contributes to the heme b binding site. Catalysis depends on charge relay system residues Tyr-95 and Glu-135. Residues 147–396 (GGWEGTRDFR…YECFGPHKVL (250 aa)) form a reductase region. The FAD-binding FR-type domain maps to 150-255 (EGTRDFRIVA…VAPAGDFFMA (106 aa)). Residues Tyr-188 and 204-207 (RQYS) contribute to the FAD site. Residue 268-273 (GVGQTP) participates in NADP(+) binding. 389-392 (CFGP) provides a ligand contact to FAD.

The protein belongs to the globin family. Two-domain flavohemoproteins subfamily. It in the C-terminal section; belongs to the flavoprotein pyridine nucleotide cytochrome reductase family. As to quaternary structure, monomer. FAD is required as a cofactor. Heme b serves as cofactor.

It localises to the cytoplasm. The catalysed reaction is 2 nitric oxide + NADPH + 2 O2 = 2 nitrate + NADP(+) + H(+). It carries out the reaction 2 nitric oxide + NADH + 2 O2 = 2 nitrate + NAD(+) + H(+). In terms of biological role, is involved in NO detoxification in an aerobic process, termed nitric oxide dioxygenase (NOD) reaction that utilizes O(2) and NAD(P)H to convert NO to nitrate, which protects the bacterium from various noxious nitrogen compounds. Therefore, plays a central role in the inducible response to nitrosative stress. In the presence of oxygen and NADH, HMP has NADH oxidase activity, which leads to the generation of superoxide and H(2)O(2), both in vitro and in vivo, and it has been suggested that HMP might act as an amplifier of superoxide stress. Under anaerobic conditions, HMP also exhibits nitric oxide reductase and FAD reductase activities. However, all these reactions are much lower than NOD activity. Functionally, various electron acceptors are also reduced by HMP in vitro, including dihydropterine, ferrisiderophores, ferric citrate, cytochrome c, nitrite, S-nitrosoglutathione, and alkylhydroperoxides. However, it is unknown if these reactions are of any biological significance in vivo. The sequence is that of Flavohemoprotein (hmp) from Escherichia coli (strain K12).